Reading from the N-terminus, the 215-residue chain is 3,4-dihydroxy-2-butanone 4-phosphate synthase (215 aa).

Residues 38–39, Asp-43, 151–155, and Glu-175 each bind D-ribulose 5-phosphate; these read RE and RRGHT. A Mg(2+)-binding site is contributed by Glu-39. His-154 lines the Mg(2+) pocket.

Belongs to the DHBP synthase family. In terms of assembly, homodimer. Requires Mg(2+) as cofactor. Mn(2+) is required as a cofactor.

It catalyses the reaction D-ribulose 5-phosphate = (2S)-2-hydroxy-3-oxobutyl phosphate + formate + H(+). Its pathway is cofactor biosynthesis; riboflavin biosynthesis; 2-hydroxy-3-oxobutyl phosphate from D-ribulose 5-phosphate: step 1/1. Functionally, catalyzes the conversion of D-ribulose 5-phosphate to formate and 3,4-dihydroxy-2-butanone 4-phosphate. The protein is 3,4-dihydroxy-2-butanone 4-phosphate synthase of Haemophilus influenzae (strain PittGG).